The sequence spans 355 residues: Isopentenyl-diphosphate delta-isomerase (355 aa).

Residue 6 to 7 participates in substrate binding; it reads RK. FMN is bound by residues 62–64, Ser-93, and Asn-122; that span reads AMT. Residue Gln-152 participates in substrate binding. Glu-153 contributes to the Mg(2+) binding site. Residues Lys-184, Thr-214, 258-259, and 280-281 contribute to the FMN site; these read GG and AG.

It belongs to the IPP isomerase type 2 family. In terms of assembly, homooctamer. Dimer of tetramers. FMN is required as a cofactor. It depends on NADPH as a cofactor. Requires Mg(2+) as cofactor.

The protein localises to the cytoplasm. It carries out the reaction isopentenyl diphosphate = dimethylallyl diphosphate. Its function is as follows. Involved in the biosynthesis of isoprenoids. Catalyzes the 1,3-allylic rearrangement of the homoallylic substrate isopentenyl (IPP) to its allylic isomer, dimethylallyl diphosphate (DMAPP). This chain is Isopentenyl-diphosphate delta-isomerase, found in Bacillus pumilus (strain SAFR-032).